The chain runs to 320 residues: Methionyl-tRNA formyltransferase (320 aa).

117 to 120 (SLLP) is a binding site for (6S)-5,6,7,8-tetrahydrofolate.

It belongs to the Fmt family.

It catalyses the reaction L-methionyl-tRNA(fMet) + (6R)-10-formyltetrahydrofolate = N-formyl-L-methionyl-tRNA(fMet) + (6S)-5,6,7,8-tetrahydrofolate + H(+). Its function is as follows. Attaches a formyl group to the free amino group of methionyl-tRNA(fMet). The formyl group appears to play a dual role in the initiator identity of N-formylmethionyl-tRNA by promoting its recognition by IF2 and preventing the misappropriation of this tRNA by the elongation apparatus. In Bordetella petrii (strain ATCC BAA-461 / DSM 12804 / CCUG 43448), this protein is Methionyl-tRNA formyltransferase.